A 181-amino-acid polypeptide reads, in one-letter code: Dual-action ribosomal maturation protein DarP (181 aa).

The segment at 1-23 (MTGIKKPMSQYQDDNELEDWGPS) is disordered.

Belongs to the DarP family.

The protein localises to the cytoplasm. In terms of biological role, member of a network of 50S ribosomal subunit biogenesis factors which assembles along the 30S-50S interface, preventing incorrect 23S rRNA structures from forming. Promotes peptidyl transferase center (PTC) maturation. The sequence is that of Dual-action ribosomal maturation protein DarP from Aeromonas salmonicida (strain A449).